A 306-amino-acid polypeptide reads, in one-letter code: MQKVLAIVGPTAIGKTDLAISLAQKLNGEIISGDSMQVYQEVEVGTAKATKEEQAKVKHYLVDNRSVFDEYSVKDFVDEAKKAISEVAKKGKLPILVGGTGFYVNALLNEMQLGERNDEERGTSQKWEDYLKENGAEKLWQILNEKDPTAAAKIPVPNSRRTMRALTVIDRTGKKFSEQQKKIKPRYDYLIIGLNSDRQEIYRRINLRVDKMMGKGMLEEAKFIYDNRDKEHQILQAIAYKEFFPYFDGEKSLEDCVTQLKTASRRYAKRQLTYFRNQLPIQWFDPLNDLECEQKIINKVREWENG.

Position 9–16 (Gly-9–Thr-16) interacts with ATP. Thr-11 to Thr-16 provides a ligand contact to substrate. An interaction with substrate tRNA region spans residues Asp-34–Gln-37.

Belongs to the IPP transferase family. Monomer. The cofactor is Mg(2+).

It carries out the reaction adenosine(37) in tRNA + dimethylallyl diphosphate = N(6)-dimethylallyladenosine(37) in tRNA + diphosphate. Catalyzes the transfer of a dimethylallyl group onto the adenine at position 37 in tRNAs that read codons beginning with uridine, leading to the formation of N6-(dimethylallyl)adenosine (i(6)A). This chain is tRNA dimethylallyltransferase, found in Lactobacillus acidophilus (strain ATCC 700396 / NCK56 / N2 / NCFM).